The primary structure comprises 189 residues: Stathmin-4 (189 aa).

Residues cysteine 20 and cysteine 22 are each lipidated (S-palmitoyl cysteine). The 142-residue stretch at serine 48 to arginine 189 folds into the SLD domain. Serine 90 carries the phosphoserine modification. Residues serine 90 to serine 188 adopt a coiled-coil conformation. A disordered region spans residues glutamine 168–arginine 189.

This sequence belongs to the stathmin family.

It localises to the golgi apparatus. The protein resides in the cell projection. It is found in the growth cone. The protein localises to the axon. In terms of biological role, exhibits microtubule-destabilizing activity. This is Stathmin-4 (STMN4) from Homo sapiens (Human).